A 237-amino-acid polypeptide reads, in one-letter code: 2-C-methyl-D-erythritol 4-phosphate cytidylyltransferase (237 aa).

Belongs to the IspD/TarI cytidylyltransferase family. IspD subfamily. In terms of assembly, homodimer.

The catalysed reaction is 2-C-methyl-D-erythritol 4-phosphate + CTP + H(+) = 4-CDP-2-C-methyl-D-erythritol + diphosphate. The protein operates within isoprenoid biosynthesis; isopentenyl diphosphate biosynthesis via DXP pathway; isopentenyl diphosphate from 1-deoxy-D-xylulose 5-phosphate: step 2/6. Catalyzes the formation of 4-diphosphocytidyl-2-C-methyl-D-erythritol from CTP and 2-C-methyl-D-erythritol 4-phosphate (MEP). The sequence is that of 2-C-methyl-D-erythritol 4-phosphate cytidylyltransferase from Pectobacterium atrosepticum (strain SCRI 1043 / ATCC BAA-672) (Erwinia carotovora subsp. atroseptica).